A 144-amino-acid polypeptide reads, in one-letter code: FK506-binding protein 2 (144 aa).

Positions 1–20 (MARIIVLIVAFMALIAGVFA) are cleaved as a signal peptide. Residues 48 to 136 (GDTVSVHYTG…IFTTELVSID (89 aa)) form the PPIase FKBP-type domain. Residues 141–144 (RDEL) carry the Prevents secretion from ER motif.

The protein belongs to the FKBP-type PPIase family. FKBP2 subfamily.

It localises to the endoplasmic reticulum. The catalysed reaction is [protein]-peptidylproline (omega=180) = [protein]-peptidylproline (omega=0). Inhibited by both FK506 and rapamycin. In terms of biological role, PPIases accelerate the folding of proteins. It catalyzes the cis-trans isomerization of proline imidic peptide bonds in oligopeptides. The polypeptide is FK506-binding protein 2 (FPR2) (Yarrowia lipolytica (strain CLIB 122 / E 150) (Yeast)).